Here is a 348-residue protein sequence, read N- to C-terminus: Beta-hexosaminidase (348 aa).

Residues D64, R72, R138, and 168-169 each bind substrate; that span reads KH. Catalysis depends on H181, which acts as the Proton donor/acceptor. D252 acts as the Nucleophile in catalysis.

Belongs to the glycosyl hydrolase 3 family. NagZ subfamily.

It is found in the cytoplasm. The enzyme catalyses Hydrolysis of terminal non-reducing N-acetyl-D-hexosamine residues in N-acetyl-beta-D-hexosaminides.. The protein operates within cell wall biogenesis; peptidoglycan recycling. Plays a role in peptidoglycan recycling by cleaving the terminal beta-1,4-linked N-acetylglucosamine (GlcNAc) from peptide-linked peptidoglycan fragments, giving rise to free GlcNAc, anhydro-N-acetylmuramic acid and anhydro-N-acetylmuramic acid-linked peptides. This is Beta-hexosaminidase from Nitrosomonas eutropha (strain DSM 101675 / C91 / Nm57).